Here is a 669-residue protein sequence, read N- to C-terminus: DNA ligase (669 aa).

Residues 34 to 38 (DAEYD), 83 to 84 (SL), and Glu114 contribute to the NAD(+) site. Lys116 acts as the N6-AMP-lysine intermediate in catalysis. Arg137, Glu171, Lys287, and Lys311 together coordinate NAD(+). Zn(2+) contacts are provided by Cys405, Cys408, Cys423, and Cys428. The BRCT domain maps to 591–669 (NVESYFAGKT…EERFLQELNK (79 aa)).

The protein belongs to the NAD-dependent DNA ligase family. LigA subfamily. The cofactor is Mg(2+). Mn(2+) serves as cofactor.

It carries out the reaction NAD(+) + (deoxyribonucleotide)n-3'-hydroxyl + 5'-phospho-(deoxyribonucleotide)m = (deoxyribonucleotide)n+m + AMP + beta-nicotinamide D-nucleotide.. In terms of biological role, DNA ligase that catalyzes the formation of phosphodiester linkages between 5'-phosphoryl and 3'-hydroxyl groups in double-stranded DNA using NAD as a coenzyme and as the energy source for the reaction. It is essential for DNA replication and repair of damaged DNA. The sequence is that of DNA ligase from Bacillus cereus (strain 03BB102).